Consider the following 219-residue polypeptide: Oligoribonuclease (219 aa).

An Exonuclease domain is found at 30 to 193 (LVWLDMEMTG…ADIVESIEEL (164 aa)). The active site involves Y151.

The protein belongs to the oligoribonuclease family.

It is found in the cytoplasm. Its function is as follows. 3'-to-5' exoribonuclease specific for small oligoribonucleotides. In Ralstonia nicotianae (strain ATCC BAA-1114 / GMI1000) (Ralstonia solanacearum), this protein is Oligoribonuclease.